A 284-amino-acid chain; its full sequence is Cuticle collagen dpy-5 (284 aa).

The segment at 88–284 (GLPSQGCPAG…PCPERKRRRV (197 aa)) is disordered. Triple-helical region regions lie at residues 94–126 (CPAG…PGLN) and 143–270 (GPPG…VGAD). The span at 106–115 (GEPGGTGPDG) shows a compositional bias: gly residues. Residues 163–177 (AGKRGTPGKDGEPGR) show a composition bias toward basic and acidic residues. Composition is skewed to low complexity over residues 181–193 (IGDQ…DGQP), 224–246 (EPGN…TGQP), and 255–271 (DGTP…GADA).

This sequence belongs to the cuticular collagen family. Collagen polypeptide chains are complexed within the cuticle by disulfide bonds and other types of covalent cross-links. Post-translationally, may be a substrate of bli-4.

Nematode cuticles are composed largely of collagen-like proteins. The cuticle functions both as an exoskeleton and as a barrier to protect the worm from its environment. In Caenorhabditis elegans, this protein is Cuticle collagen dpy-5 (dpy-5).